The chain runs to 363 residues: Adenosine deaminase (363 aa).

Zn(2+) is bound by residues H42 and H44. A purine D-ribonucleoside is bound by residues 44–46, D172, and G201; that span reads HLD. The interval 170–184 is gating helix loop; regulates binding affinity for substrates and thus substrate selectivity; the sequence is IGDTGHEAANIKASA. Residue H226 coordinates Zn(2+). Positions 229, 253, and 310 each coordinate a purine D-ribonucleoside. D310 contributes to the Zn(2+) binding site.

This sequence belongs to the metallo-dependent hydrolases superfamily. Adenosine and AMP deaminases family. Zn(2+) is required as a cofactor.

The catalysed reaction is adenosine + H2O + H(+) = inosine + NH4(+). The enzyme catalyses S-methyl-5'-thioadenosine + H2O + H(+) = S-methyl-5'-thioinosine + NH4(+). It functions in the pathway purine metabolism; purine nucleoside salvage. Inhibited by coformycin and methylthiocoformycin (MT-coformycin). Catalyzes the hydrolytic deamination of adenosine to produce inosine. Unlike mammalian adenosine deaminases, also catalyzes the deamination of 5'-methylthioadenosine (MTA), a by-product of polyamine biosynthesis, to produce 5'-methylthioinosine (MTI). Plays an essential role in the purine salvage pathway which allows the parasite to use host cell purines for the synthesis of nucleic acids. The sequence is that of Adenosine deaminase from Plasmodium cynomolgi (strain B).